Here is a 320-residue protein sequence, read N- to C-terminus: Glutaminyl-peptide cyclotransferase (320 aa).

A compositionally biased stretch (basic residues) spans 1–12 (MATRSPYKRQTK). The disordered stretch occupies residues 1–22 (MATRSPYKRQTKRSMIQSLPAS). Over 1–36 (MATRSPYKRQTKRSMIQSLPASSSASSRRRFISRKR) the chain is Cytoplasmic. Residues 37–57 (FAMMIPLALLSGAVFLFFMPF) traverse the membrane as a helical; Signal-anchor for type II membrane protein segment. The Lumenal portion of the chain corresponds to 58-320 (NSWGQSSGSS…GNYIEQQCLV (263 aa)). Residues asparagine 99 and asparagine 163 are each glycosylated (N-linked (GlcNAc...) asparagine).

Belongs to the plant glutaminyl-peptide cyclotransferase family. Post-translationally, glycosylated.

The protein resides in the endoplasmic reticulum membrane. It carries out the reaction N-terminal L-glutaminyl-[peptide] = N-terminal 5-oxo-L-prolyl-[peptide] + NH4(+). Its function is as follows. Converts glutamine and N-terminal glutamyl residues in peptides to 5-oxoproline and 5-oxoproline residues. Not involved in the major pathway for 5-oxoproline production. The protein is Glutaminyl-peptide cyclotransferase (QCT) of Arabidopsis thaliana (Mouse-ear cress).